The chain runs to 655 residues: Squalene-tetrahymanol cyclase THC1 (655 aa).

A signal peptide spans 1 to 20 (MKKILIGLIIGLFLFSSVNA). Residues Asn23, Asn44, Asn69, and Asn77 are each glycosylated (N-linked (GlcNAc...) asparagine). Asp373 acts as the Proton donor in catalysis. PFTB repeat units follow at residues 393 to 435 (IPET…GIAN) and 515 to 562 (VQNS…GLLA).

The protein belongs to the terpene cyclase/mutase family.

The protein resides in the membrane. It catalyses the reaction tetrahymanol = squalene + H2O. Its activity is regulated as follows. 2,3-iminosqualene and N,N-dimethyldodecylamine~N-oxlde are effective inhibitors with IC(50) values of 50 and 30 nM, respectively. Functionally, squalene cyclase that catalyzes the oxygen-independent cyclization of squalene into tetrahymanol, a triterpenoid sterol with five cyclohexyl rings that is involved in membrane integrity, permeability and fluidity. The sequence is that of Squalene-tetrahymanol cyclase THC1 from Tetrahymena thermophila (strain SB210).